The following is a 1143-amino-acid chain: Disease resistance protein Pik-1 (1143 aa).

The interval 1 to 190 (MEAAAMAVTA…PLRIMGGEMQ (190 aa)) is structured coiled coil (CC) domain. One can recognise an HMA domain in the interval 189 to 258 (MQKIVFKIPM…KVGHAELLQV (70 aa)). Residues 191–264 (KIVFKIPMVD…LLQVSQVKED (74 aa)) form an HMA-like domain region. An NB-ARC domain is found at 282–570 (HEVKTICILG…WIAEGFVSEE (289 aa)). 10 LRR repeats span residues 681–706 (FKRL…ICEQ), 708–731 (SLRV…MRKL), 732–754 (KHLE…IGEL), 756–777 (HLRI…IREL), 778–800 (QHLH…VGKL), 802–823 (NLKI…IGEL), 824–848 (NHLQ…QISQ), 945–968 (MPNL…INGT), 979–1002 (DSRL…EFKF), and 1004–1027 (AGPA…VFRC).

The protein belongs to the disease resistance NB-LRR family. In terms of assembly, interacts with AVR-Pik through its N-terminal part containing the HMA-like domain.

Its function is as follows. Disease resistance (R) protein that specifically recognizes the AVR-Pik effector avirulence protein from M.oryzae. Resistance proteins guard the plant against pathogens that contain an appropriate avirulence protein via an indirect interaction with this avirulence protein. That triggers a defense system including the hypersensitive response, which restricts the pathogen growth. Contribution of Pik-2 is required to recognize the effector avirulence protein AVR-Pik. The sequence is that of Disease resistance protein Pik-1 from Oryza sativa subsp. japonica (Rice).